Here is a 466-residue protein sequence, read N- to C-terminus: Light-independent protochlorophyllide reductase subunit N (466 aa).

[4Fe-4S] cluster-binding residues include C23, C48, and C108.

Belongs to the BchN/ChlN family. Protochlorophyllide reductase is composed of three subunits; ChlL, ChlN and ChlB. Forms a heterotetramer of two ChlB and two ChlN subunits. [4Fe-4S] cluster is required as a cofactor.

The enzyme catalyses chlorophyllide a + oxidized 2[4Fe-4S]-[ferredoxin] + 2 ADP + 2 phosphate = protochlorophyllide a + reduced 2[4Fe-4S]-[ferredoxin] + 2 ATP + 2 H2O. Its pathway is porphyrin-containing compound metabolism; chlorophyll biosynthesis (light-independent). Its function is as follows. Component of the dark-operative protochlorophyllide reductase (DPOR) that uses Mg-ATP and reduced ferredoxin to reduce ring D of protochlorophyllide (Pchlide) to form chlorophyllide a (Chlide). This reaction is light-independent. The NB-protein (ChlN-ChlB) is the catalytic component of the complex. The protein is Light-independent protochlorophyllide reductase subunit N of Synechococcus elongatus (strain ATCC 33912 / PCC 7942 / FACHB-805) (Anacystis nidulans R2).